We begin with the raw amino-acid sequence, 272 residues long: Shikimate dehydrogenase (NADP(+)) (272 aa).

Residues 14–16 (SKS) and threonine 61 each bind shikimate. The active-site Proton acceptor is lysine 65. Glutamate 77 lines the NADP(+) pocket. Residues asparagine 86 and aspartate 102 each contribute to the shikimate site. Residues 126 to 130 (GAGGA), 149 to 154 (NRTVFR), and methionine 213 contribute to the NADP(+) site. Tyrosine 215 is a shikimate binding site. Glycine 237 is a binding site for NADP(+).

The protein belongs to the shikimate dehydrogenase family. As to quaternary structure, homodimer.

The enzyme catalyses shikimate + NADP(+) = 3-dehydroshikimate + NADPH + H(+). Its pathway is metabolic intermediate biosynthesis; chorismate biosynthesis; chorismate from D-erythrose 4-phosphate and phosphoenolpyruvate: step 4/7. Functionally, involved in the biosynthesis of the chorismate, which leads to the biosynthesis of aromatic amino acids. Catalyzes the reversible NADPH linked reduction of 3-dehydroshikimate (DHSA) to yield shikimate (SA). In Escherichia coli O127:H6 (strain E2348/69 / EPEC), this protein is Shikimate dehydrogenase (NADP(+)).